A 161-amino-acid polypeptide reads, in one-letter code: Protein ZMO0507 (161 aa).

The protein belongs to the free Met sulfoxide reductase family.

The polypeptide is Protein ZMO0507 (Zymomonas mobilis subsp. mobilis (strain ATCC 31821 / ZM4 / CP4)).